Reading from the N-terminus, the 1331-residue chain is DNA-directed RNA polymerase subunit beta' (1331 aa).

Residues cysteine 220, cysteine 293, cysteine 300, and cysteine 303 each coordinate Zn(2+). Disordered regions lie at residues 1236–1257 (DFVDEGTSRSPNGYSNVVTNDN) and 1294–1331 (ISGDELISDDTPIPSDVQGKAPVIDDDAMIDDNWMKDQ). Residues 1243–1257 (SRSPNGYSNVVTNDN) show a composition bias toward polar residues.

It belongs to the RNA polymerase beta' chain family. RpoC2 subfamily. In cyanobacteria the RNAP catalytic core is composed of 2 alpha, 1 beta, 1 beta', 1 gamma and 1 omega subunit. When a sigma factor is associated with the core the holoenzyme is formed, which can initiate transcription. Zn(2+) serves as cofactor.

It catalyses the reaction RNA(n) + a ribonucleoside 5'-triphosphate = RNA(n+1) + diphosphate. Its function is as follows. DNA-dependent RNA polymerase catalyzes the transcription of DNA into RNA using the four ribonucleoside triphosphates as substrates. The chain is DNA-directed RNA polymerase subunit beta' from Picosynechococcus sp. (strain ATCC 27264 / PCC 7002 / PR-6) (Agmenellum quadruplicatum).